Reading from the N-terminus, the 630-residue chain is ATP-dependent zinc metalloprotease FtsH 2 (630 aa).

Topologically, residues 1–8 (MNNNPNRR) are cytoplasmic. Residues 9 to 29 (GSLIGPLFIYFILAMLIFMSI) traverse the membrane as a helical segment. At 30-110 (SQLNTSNITE…YIQNTGASWW (81 aa)) the chain is on the periplasmic side. A helical membrane pass occupies residues 111 to 131 (VTMLIYMLPLIILMFFWFWMF). Residues 132-630 (RRSGTGEGIP…KETNLFVSYA (499 aa)) lie on the Cytoplasmic side of the membrane. Position 203 to 210 (203 to 210 (GPPGTGKT)) interacts with ATP. Histidine 425 serves as a coordination point for Zn(2+). Residue glutamate 426 is part of the active site. Histidine 429 and aspartate 502 together coordinate Zn(2+).

In the central section; belongs to the AAA ATPase family. This sequence in the C-terminal section; belongs to the peptidase M41 family. As to quaternary structure, homohexamer. Zn(2+) is required as a cofactor.

The protein localises to the cell inner membrane. Its function is as follows. Acts as a processive, ATP-dependent zinc metallopeptidase for both cytoplasmic and membrane proteins. Plays a role in the quality control of integral membrane proteins. This is ATP-dependent zinc metalloprotease FtsH 2 from Petrotoga mobilis (strain DSM 10674 / SJ95).